Consider the following 227-residue polypeptide: Ribose-5-phosphate isomerase A (227 aa).

Substrate-binding positions include Thr-26–Thr-29, Asp-82–Asp-85, and Lys-95–Gly-98. Glu-104 (proton acceptor) is an active-site residue. Lys-122 provides a ligand contact to substrate.

This sequence belongs to the ribose 5-phosphate isomerase family. In terms of assembly, homodimer.

The catalysed reaction is aldehydo-D-ribose 5-phosphate = D-ribulose 5-phosphate. It participates in carbohydrate degradation; pentose phosphate pathway; D-ribose 5-phosphate from D-ribulose 5-phosphate (non-oxidative stage): step 1/1. Catalyzes the reversible conversion of ribose-5-phosphate to ribulose 5-phosphate. This Streptococcus pyogenes serotype M5 (strain Manfredo) protein is Ribose-5-phosphate isomerase A.